The chain runs to 205 residues: Thiamine-phosphate synthase (205 aa).

Residues 34-38 and N66 contribute to the 4-amino-2-methyl-5-(diphosphooxymethyl)pyrimidine site; that span reads QLRCK. 2 residues coordinate Mg(2+): D67 and D86. S105 is a binding site for 4-amino-2-methyl-5-(diphosphooxymethyl)pyrimidine. 2-[(2R,5Z)-2-carboxy-4-methylthiazol-5(2H)-ylidene]ethyl phosphate is bound at residue 131–133; that stretch reads TTT. K134 contributes to the 4-amino-2-methyl-5-(diphosphooxymethyl)pyrimidine binding site. G163 contributes to the 2-[(2R,5Z)-2-carboxy-4-methylthiazol-5(2H)-ylidene]ethyl phosphate binding site.

This sequence belongs to the thiamine-phosphate synthase family. Requires Mg(2+) as cofactor.

It carries out the reaction 2-[(2R,5Z)-2-carboxy-4-methylthiazol-5(2H)-ylidene]ethyl phosphate + 4-amino-2-methyl-5-(diphosphooxymethyl)pyrimidine + 2 H(+) = thiamine phosphate + CO2 + diphosphate. It catalyses the reaction 2-(2-carboxy-4-methylthiazol-5-yl)ethyl phosphate + 4-amino-2-methyl-5-(diphosphooxymethyl)pyrimidine + 2 H(+) = thiamine phosphate + CO2 + diphosphate. The enzyme catalyses 4-methyl-5-(2-phosphooxyethyl)-thiazole + 4-amino-2-methyl-5-(diphosphooxymethyl)pyrimidine + H(+) = thiamine phosphate + diphosphate. The protein operates within cofactor biosynthesis; thiamine diphosphate biosynthesis; thiamine phosphate from 4-amino-2-methyl-5-diphosphomethylpyrimidine and 4-methyl-5-(2-phosphoethyl)-thiazole: step 1/1. In terms of biological role, condenses 4-methyl-5-(beta-hydroxyethyl)thiazole monophosphate (THZ-P) and 2-methyl-4-amino-5-hydroxymethyl pyrimidine pyrophosphate (HMP-PP) to form thiamine monophosphate (TMP). The sequence is that of Thiamine-phosphate synthase from Neisseria meningitidis serogroup A / serotype 4A (strain DSM 15465 / Z2491).